The following is a 140-amino-acid chain: Large ribosomal subunit protein bL17 (140 aa).

This sequence belongs to the bacterial ribosomal protein bL17 family. Part of the 50S ribosomal subunit. Contacts protein L32.

The polypeptide is Large ribosomal subunit protein bL17 (Ruegeria pomeroyi (strain ATCC 700808 / DSM 15171 / DSS-3) (Silicibacter pomeroyi)).